Here is a 130-residue protein sequence, read N- to C-terminus: Protein ApaG (130 aa).

The ApaG domain maps to 3–127 (SAMTRSINIL…FSLDSPHAKR (125 aa)).

This chain is Protein ApaG, found in Parvibaculum lavamentivorans (strain DS-1 / DSM 13023 / NCIMB 13966).